The chain runs to 457 residues: tRNA modification GTPase MnmE (457 aa).

(6S)-5-formyl-5,6,7,8-tetrahydrofolate contacts are provided by R23, E85, and R124. One can recognise a TrmE-type G domain in the interval 220-376 (GALVVLAGQV…LVTAIRAAVL (157 aa)). A K(+)-binding site is contributed by N230. Residues 230–235 (NAGKSS), 249–255 (TDLPGTT), and 274–277 (DTAG) each bind GTP. S234 is a Mg(2+) binding site. K(+) contacts are provided by T249, L251, and T254. T255 serves as a coordination point for Mg(2+). K457 contributes to the (6S)-5-formyl-5,6,7,8-tetrahydrofolate binding site.

The protein belongs to the TRAFAC class TrmE-Era-EngA-EngB-Septin-like GTPase superfamily. TrmE GTPase family. In terms of assembly, homodimer. Heterotetramer of two MnmE and two MnmG subunits. It depends on K(+) as a cofactor.

It localises to the cytoplasm. In terms of biological role, exhibits a very high intrinsic GTPase hydrolysis rate. Involved in the addition of a carboxymethylaminomethyl (cmnm) group at the wobble position (U34) of certain tRNAs, forming tRNA-cmnm(5)s(2)U34. This chain is tRNA modification GTPase MnmE, found in Nitratidesulfovibrio vulgaris (strain DP4) (Desulfovibrio vulgaris).